The primary structure comprises 330 residues: NADH-quinone oxidoreductase subunit H (330 aa).

The next 8 helical transmembrane spans lie at 3–23 (AAFV…FSAL), 76–96 (PVFM…MAAI), 118–138 (VGLL…LLAG), 161–181 (EVVT…ISLV), 188–208 (AGGM…LFLI), 244–264 (FFIG…LIFL), 272–292 (FIPG…LFLW), and 307–327 (WLCW…TGIV).

This sequence belongs to the complex I subunit 1 family. In terms of assembly, NDH-1 is composed of 14 different subunits. Subunits NuoA, H, J, K, L, M, N constitute the membrane sector of the complex.

The protein localises to the cell inner membrane. The catalysed reaction is a quinone + NADH + 5 H(+)(in) = a quinol + NAD(+) + 4 H(+)(out). NDH-1 shuttles electrons from NADH, via FMN and iron-sulfur (Fe-S) centers, to quinones in the respiratory chain. The immediate electron acceptor for the enzyme in this species is believed to be ubiquinone. Couples the redox reaction to proton translocation (for every two electrons transferred, four hydrogen ions are translocated across the cytoplasmic membrane), and thus conserves the redox energy in a proton gradient. This subunit may bind ubiquinone. This chain is NADH-quinone oxidoreductase subunit H, found in Nitratiruptor sp. (strain SB155-2).